We begin with the raw amino-acid sequence, 329 residues long: Chlorophyllase-1, chloroplastic (329 aa).

The N-terminal 21 residues, 1–21 (MAAMVDSKPAASVQGTPLLAT), are a transit peptide targeting the chloroplast. A GXSXG motif is present at residues 145–149 (GHSRG). S147 functions as the Nucleophile in the catalytic mechanism. Catalysis depends on charge relay system residues D169 and H242.

This sequence belongs to the AB hydrolase superfamily. Lipase family.

It is found in the plastid. The protein localises to the chloroplast. The catalysed reaction is a chlorophyll + H2O = a chlorophyllide + phytol + H(+). It functions in the pathway porphyrin-containing compound metabolism; chlorophyll degradation. Its function is as follows. Catalyzes the hydrolysis of ester bond in chlorophyll to yield chlorophyllide and phytol. In Citrus unshiu (Satsuma mandarin), this protein is Chlorophyllase-1, chloroplastic.